A 587-amino-acid chain; its full sequence is Sedolisin (587 aa).

The N-terminal stretch at 1-32 (MKSSAAKQTVLCLNRYAVVALPLAIASFAAFG) is a signal peptide. A propeptide spans 33 to 215 (ASPASTLWAP…VGERSAAKTL (183 aa)) (removed in mature form). The Peptidase S53 domain maps to 219–583 (TAKGHNPTEF…AKLSAYIRSN (365 aa)). Residues 276-295 (TIQTGSSNGDYSDDQQGQGE) form a disordered region. Catalysis depends on charge relay system residues Glu-295 and Asp-299. A disulfide bridge connects residues Cys-352 and Cys-391. Residue Ser-502 is the Charge relay system of the active site. Ca(2+)-binding residues include Asp-543, Val-544, Gly-559, Gly-561, and Asp-563. Positions 586–587 (GH) are cleaved as a propeptide — removed in mature form.

The cofactor is Ca(2+). In terms of processing, autocatalytically processed.

It is found in the periplasm. The catalysed reaction is Hydrolysis of the B chain of insulin at 13-Glu-|-Ala-14, 15-Leu-|-Tyr-16 and 25-Phe-|-Tyr-26 and angiotensin I at 4-Tyr-|-Ile-5. A good synthetic substrate is Lys-Pro-Ile-Glu-Phe-|-Phe(NO2)-Arg-Leu.. Its activity is regulated as follows. Inhibited by 1,2-epoxy-3-(p-nitrophenoxy)propane (EPNP), but not by carboxyl proteinase inhibitors, such as pepstatin, pepstatin Ac (S-PI) and diazoacetyl-DL-norleucine methyl ester (DAN). Inhibited by tyrostatin, pseudo-tyrostatin, AcIPF, AcIAF, chymostatin and pseudo-iodotyrostatin. Pepstatin-insensitive serine-carboxyl proteinase. In vitro can hydrolyze various synthetic peptides. Also shows activity on acid-denatured hemoglobin and on casein. In Pseudomonas sp. (strain 101) (Achromobacter parvulus T1), this protein is Sedolisin (pcp).